We begin with the raw amino-acid sequence, 648 residues long: Transcription initiation factor TFIID subunit 5 (648 aa).

Residues 1 to 13 show a composition bias toward low complexity; sequence MDSENSSSHSISS. Residues 1-21 form a disordered region; the sequence is MDSENSSSHSISSPQMFQNTH. A LisH domain is found at 35–67; that stretch reads MNNESLQMIIGYLRRNGLTETEELLTREAGPVL. WD repeat units follow at residues 317-358, 392-431, 433-472, 475-514, 517-556, and 560-599; these read NAPI…KKLR, GHGGPVFSVNFSPDRRLLISSAGDRTVRLWSMETQRNAVI, RTPAVVWQAQFCSRGYYFATASADKTAAMWSTDRMHPLRI, DPYGDVGCIDYHPNCNYIAGGSDDRYVRVWDVCSGTRVRI, GHKASIIAVKFSPCGRYIVSLDAIGNLMIWDLAYQRLVAA, and EQAGTKGSITFSRDGGVFAVSHGNSSIQLYSLDTLIGTVL.

Belongs to the WD repeat TAF5 family. As to quaternary structure, component of the TFIID basal transcription factor complex, composed of TATA-box-binding protein tbp-1, and a number of TBP-associated factors (TAFs).

The protein resides in the nucleus. The TFIID basal transcription factor complex plays a major role in the initiation of RNA polymerase II (Pol II)-dependent transcription. TFIID recognizes and binds promoters via its subunit tbp-1, a TATA-box-binding protein, and promotes assembly of the pre-initiation complex (PIC). The TFIID complex consists of tbp-1 and TBP-associated factors (TAFs), including taf-5. Essential for early embryonic development, but not required for transcription of some genes; probably acts via activating transcription initiation by RNA Pol II, as part of the TFIID complex. This Caenorhabditis elegans protein is Transcription initiation factor TFIID subunit 5.